Reading from the N-terminus, the 160-residue chain is Cyclic pyranopterin monophosphate synthase (160 aa).

Residues 75-77 (MCH) and 116-117 (ME) each bind substrate. The active site involves aspartate 131.

It belongs to the MoaC family. In terms of assembly, homohexamer; trimer of dimers.

The enzyme catalyses (8S)-3',8-cyclo-7,8-dihydroguanosine 5'-triphosphate = cyclic pyranopterin phosphate + diphosphate. The protein operates within cofactor biosynthesis; molybdopterin biosynthesis. In terms of biological role, catalyzes the conversion of (8S)-3',8-cyclo-7,8-dihydroguanosine 5'-triphosphate to cyclic pyranopterin monophosphate (cPMP). This Staphylococcus haemolyticus (strain JCSC1435) protein is Cyclic pyranopterin monophosphate synthase.